A 363-amino-acid chain; its full sequence is Regulator of G-protein signaling rgs-3 (363 aa).

Positions 1 to 70 are disordered; it reads MWRSYKAETP…NSSATSPTPS (70 aa). The segment covering 21 to 35 has biased composition (basic and acidic residues); it reads LNLHDSSESDHEGRQ. 2 stretches are compositionally biased toward low complexity: residues 36–50 and 58–70; these read SRSA…APAS and PITN…PTPS. 2 RGS domains span residues 112–225 and 240–359; these read NCAN…LEYL and SFEG…IDLL.

Post-translationally, may be phosphorylated and activated by egl-4.

Functionally, modulates chemotaxis responses by regulating positively the sensitivity to CO2 levels in BAG neurons and by regulating negatively the sensitivity to quinine in ASH sensory neurons. The chain is Regulator of G-protein signaling rgs-3 (rgs-3) from Caenorhabditis elegans.